We begin with the raw amino-acid sequence, 192 residues long: 7-methyl-GTP pyrophosphatase (192 aa).

Asp69 functions as the Proton acceptor in the catalytic mechanism.

Belongs to the Maf family. YceF subfamily. The cofactor is a divalent metal cation.

The protein localises to the cytoplasm. The catalysed reaction is N(7)-methyl-GTP + H2O = N(7)-methyl-GMP + diphosphate + H(+). Functionally, nucleoside triphosphate pyrophosphatase that hydrolyzes 7-methyl-GTP (m(7)GTP). May have a dual role in cell division arrest and in preventing the incorporation of modified nucleotides into cellular nucleic acids. The chain is 7-methyl-GTP pyrophosphatase from Pseudomonas aeruginosa (strain ATCC 15692 / DSM 22644 / CIP 104116 / JCM 14847 / LMG 12228 / 1C / PRS 101 / PAO1).